A 411-amino-acid chain; its full sequence is NAD-dependent dihydropyrimidine dehydrogenase subunit PreA (411 aa).

Substrate is bound by residues Asn76 and 134-136 (NFS). The active-site Nucleophile is Cys137. 201–202 (NT) contacts substrate. 2 consecutive 4Fe-4S ferredoxin-type domains span residues 335-367 (VYPR…WSEK) and 369-398 (RTPH…LGEV). The [4Fe-4S] cluster site is built by Cys344, Cys347, Cys350, Cys354, Cys378, Cys381, Cys384, and Cys388.

It belongs to the dihydropyrimidine dehydrogenase family. Heterotetramer of 2 PreA and 2 PreT subunits. It depends on [4Fe-4S] cluster as a cofactor.

The catalysed reaction is 5,6-dihydrouracil + NAD(+) = uracil + NADH + H(+). It carries out the reaction 5,6-dihydrothymine + NAD(+) = thymine + NADH + H(+). Its function is as follows. Involved in pyrimidine base degradation. Catalyzes physiologically the reduction of uracil to 5,6-dihydrouracil (DHU) by using NADH as a specific cosubstrate. It also catalyzes the reverse reaction and the reduction of thymine to 5,6-dihydrothymine (DHT). The protein is NAD-dependent dihydropyrimidine dehydrogenase subunit PreA (preA) of Escherichia coli O157:H7.